The sequence spans 529 residues: Listeriolysin O (529 aa).

The N-terminal stretch at 1 to 24 (MKKIMLVFITLILVSLPIAQQTEA) is a signal peptide. Transmembrane regions (beta stranded) follow at residues 214–227 (ESQL…AFKA), 234–243 (VNFGAISEGK), 312–321 (STKVKAAFDA), and 329–341 (SGDV…IKNS). The Conserved undecapeptide signature appears at 483–493 (ECTGLAWEWWR). The short motif at 515–516 (TL) is the Cholesterol binding element.

Belongs to the cholesterol-dependent cytolysin family. Homooligomeric pore complex of 35 to 50 subunits; when inserted in the host membrane.

The protein resides in the secreted. Its subcellular location is the host membrane. It localises to the host cell membrane. Its activity is regulated as follows. Activity of listeriolysin O is regulated on multiple levels. It should be high in the phagosome, thereby allowing escape of the bacteria from the phagosomal compartment. Then, once inside the host cytosol, the activity must be controlled to prevent lysis of the host plasma membrane and loss of the intracellular environment. Its function is as follows. A cholesterol-dependent toxin that causes cytolysis by forming pores in cholesterol containing host membranes. After binding to target membranes, the protein undergoes a major conformation change, leading to its insertion in the host membrane and formation of an oligomeric pore complex. Cholesterol is required for binding to host membranes, membrane insertion and pore formation; cholesterol binding is mediated by a Thr-Leu pair in the C-terminus. Acts as a major virulence factor required for the escape of bacteria from phagosomal vacuoles and entry into the host cytosol. Can be reversibly inactivated by oxidation. This chain is Listeriolysin O (hly), found in Listeria monocytogenes serotype 4b (strain F2365).